A 347-amino-acid polypeptide reads, in one-letter code: Selenide, water dikinase (347 aa).

Cys17 is an active-site residue. ATP is bound by residues Lys20 and 48-50 (TRD). Asp51 contacts Mg(2+). Residues Asp68, Asp91, and 139 to 141 (GHS) contribute to the ATP site. Asp91 lines the Mg(2+) pocket. Asp227 provides a ligand contact to Mg(2+).

The protein belongs to the selenophosphate synthase 1 family. Class I subfamily. As to quaternary structure, homodimer. Requires Mg(2+) as cofactor.

The catalysed reaction is hydrogenselenide + ATP + H2O = selenophosphate + AMP + phosphate + 2 H(+). In terms of biological role, synthesizes selenophosphate from selenide and ATP. The protein is Selenide, water dikinase of Salmonella typhi.